Reading from the N-terminus, the 203-residue chain is Glycerol-3-phosphate acyltransferase (203 aa).

Transmembrane regions (helical) follow at residues 6–26 (LTLA…AVLV), 56–76 (AAAM…YVAF), 82–102 (AVSL…PIFF), 118–138 (APIG…VVLI), and 141–161 (YSSL…WYFD).

This sequence belongs to the PlsY family. In terms of assembly, probably interacts with PlsX.

The protein localises to the cell inner membrane. It catalyses the reaction an acyl phosphate + sn-glycerol 3-phosphate = a 1-acyl-sn-glycero-3-phosphate + phosphate. It participates in lipid metabolism; phospholipid metabolism. Functionally, catalyzes the transfer of an acyl group from acyl-phosphate (acyl-PO(4)) to glycerol-3-phosphate (G3P) to form lysophosphatidic acid (LPA). This enzyme utilizes acyl-phosphate as fatty acyl donor, but not acyl-CoA or acyl-ACP. The sequence is that of Glycerol-3-phosphate acyltransferase from Shewanella loihica (strain ATCC BAA-1088 / PV-4).